The sequence spans 665 residues: Methionine--tRNA ligase (665 aa).

Positions 12–22 (YYPSGKLHIGS) match the 'HIGH' region motif. Residues 308-312 (KMSKS) carry the 'KMSKS' region motif. Lysine 311 serves as a coordination point for ATP. The region spanning 562–665 (TFDAVEIRVA…SSVPNGSIIG (104 aa)) is the tRNA-binding domain.

The protein belongs to the class-I aminoacyl-tRNA synthetase family. MetG type 2B subfamily. Homodimer.

It localises to the cytoplasm. It catalyses the reaction tRNA(Met) + L-methionine + ATP = L-methionyl-tRNA(Met) + AMP + diphosphate. In terms of biological role, is required not only for elongation of protein synthesis but also for the initiation of all mRNA translation through initiator tRNA(fMet) aminoacylation. The sequence is that of Methionine--tRNA ligase (metG) from Streptococcus pyogenes serotype M18 (strain MGAS8232).